The sequence spans 69 residues: Protein transport protein Sec61 subunit gamma (69 aa).

At 1–32 (MDAVDSVVDPLREFAKDSVRLVKRCHKPDRKE) the chain is on the cytoplasmic side. The chain crosses the membrane as a helical span at residues 33-61 (FTKVAARTAIGFVVMGFVGFFVKLIFIPI). Residues 62–69 (NNIIVGSG) lie on the Extracellular side of the membrane.

The protein belongs to the SecE/SEC61-gamma family. In terms of assembly, heterotrimeric complex composed of SEC61-alpha, SEC61-beta and SEC61-gamma.

It localises to the endoplasmic reticulum membrane. Necessary for protein translocation in the endoplasmic reticulum. This Oryza sativa subsp. japonica (Rice) protein is Protein transport protein Sec61 subunit gamma.